An 89-amino-acid polypeptide reads, in one-letter code: Small ribosomal subunit protein bS16 (89 aa).

Belongs to the bacterial ribosomal protein bS16 family.

The sequence is that of Small ribosomal subunit protein bS16 from Chloroflexus aurantiacus (strain ATCC 29364 / DSM 637 / Y-400-fl).